A 348-amino-acid chain; its full sequence is Peroxidase 40 (348 aa).

Positions 1–21 are cleaved as a signal peptide; sequence MKNLFNLFLMFFFAMPILSLS. The N-linked (GlcNAc...) asparagine glycan is linked to Asn-26. Intrachain disulfides connect Cys-59-Cys-139, Cys-92-Cys-97, Cys-145-Cys-344, and Cys-224-Cys-256. The Proton acceptor role is filled by His-90. Asp-91, Val-94, Gly-96, Asp-98, and Ser-100 together coordinate Ca(2+). A disordered region spans residues 170 to 189; it reads GRKDSRTASKQAATNGLPSP. The span at 177-189 shows a compositional bias: polar residues; it reads ASKQAATNGLPSP. Pro-187 lines the substrate pocket. Residue Asn-190 is glycosylated (N-linked (GlcNAc...) asparagine). His-217 contributes to the heme b binding site. Residue Thr-218 participates in Ca(2+) binding. Ca(2+) is bound by residues Asp-269, Thr-272, and Asp-277.

This sequence belongs to the peroxidase family. Classical plant (class III) peroxidase subfamily. Requires heme b as cofactor. The cofactor is Ca(2+).

It localises to the secreted. It catalyses the reaction 2 a phenolic donor + H2O2 = 2 a phenolic radical donor + 2 H2O. Its function is as follows. Removal of H(2)O(2), oxidation of toxic reductants, biosynthesis and degradation of lignin, suberization, auxin catabolism, response to environmental stresses such as wounding, pathogen attack and oxidative stress. These functions might be dependent on each isozyme/isoform in each plant tissue. The sequence is that of Peroxidase 40 (PER40) from Arabidopsis thaliana (Mouse-ear cress).